The following is a 347-amino-acid chain: Gamma-glutamyl hydrolase 2 (347 aa).

The first 22 residues, 1-22, serve as a signal peptide directing secretion; it reads MWSYVWLPLVALSLFKDSIIMA. The Gamma-glutamyl hydrolase domain maps to 45–341; the sequence is APDPNLNYRP…IGYDEVYIFT (297 aa). The Nucleophile role is filled by C155. H268 functions as the Proton donor in the catalytic mechanism.

The protein belongs to the peptidase C26 family. As to expression, expressed in roots, in leaves, stems and siliques.

The protein localises to the vacuole. Its subcellular location is the secreted. It is found in the extracellular space. The protein resides in the cell wall. It catalyses the reaction (6S)-5,6,7,8-tetrahydrofolyl-(gamma-L-Glu)(n) + (n-1) H2O = (6S)-5,6,7,8-tetrahydrofolate + (n-1) L-glutamate. In terms of biological role, cleaves the polyglutamate sidechains of folate polyglutamates in the vacuole. Is important for polyglutamyl tail length determination before vacuolar exit. Plays a role on folate stability and intracellular folate content. Has endopeptidase activity against 4-amino-10-methylpteroyl penta-, tetra-, tri- and di-gamma-L-glutamate substrates and is responsible for the production of folic acid, also called pteroylglutamic acid (PteGlu) from teroylpolyglutamates. The protein is Gamma-glutamyl hydrolase 2 (GGH2) of Arabidopsis thaliana (Mouse-ear cress).